The chain runs to 766 residues: Discoidin domain-containing receptor A (766 aa).

The first 18 residues, 1–18, serve as a signal peptide directing secretion; it reads MQIALVLLAIYGTTTTNT. Residues 19–372 lie on the Extracellular side of the membrane; the sequence is LRIDQCGENA…PPSSAATQQL (354 aa). F5/8 type C domains lie at 24-180 and 195-351; these read CGEN…IHGC and SRLD…FTSA. Residues cysteine 24 and cysteine 180 are joined by a disulfide bond. N-linked (GlcNAc...) asparagine glycans are attached at residues asparagine 87, asparagine 103, asparagine 129, asparagine 242, asparagine 268, asparagine 311, and asparagine 353. A helical membrane pass occupies residues 373–393; sequence LVVCGIIFLTIFACVAYCVSV. Over 394–766 the chain is Cytoplasmic; sequence CLKRRQKNKS…FERLVKPFQD (373 aa). Positions 475 to 501 are disordered; that stretch reads NFPPPPEGREEHTYSQPVSPENSSNGS. Positions 488 to 501 are enriched in polar residues; it reads YSQPVSPENSSNGS. The region spanning 519 to 766 is the Protein kinase domain; the sequence is LLIGKAIGEG…FERLVKPFQD (248 aa). ATP-binding positions include 525–533 and lysine 547; that span reads IGEGKFTMI.

The protein belongs to the protein kinase superfamily. Tyr protein kinase family. Insulin receptor subfamily. As to expression, expressed in neurons in head and tail, some motoneurons in ventral nerve cord, in PVP interneurons, pharynx and stomato-intestinal muscle.

It is found in the cell membrane. The protein resides in the cell projection. Its subcellular location is the axon. The protein localises to the perikaryon. Functionally, receptor which, together with svh-4, is involved in axon guidance to establish the tracts for the ventral and dorsal nerve cords during nervous system development. May play a role in axon regeneration following injury in D-type motor neurons. This Caenorhabditis elegans protein is Discoidin domain-containing receptor A.